The primary structure comprises 245 residues: Orotidine 5'-phosphate decarboxylase (245 aa).

Residues D22, K44, 71–80, T131, R192, Q201, G221, and R222 each bind substrate; that span reads DLKFHDIPNT. K73 serves as the catalytic Proton donor.

Belongs to the OMP decarboxylase family. Type 1 subfamily. Homodimer.

The enzyme catalyses orotidine 5'-phosphate + H(+) = UMP + CO2. It participates in pyrimidine metabolism; UMP biosynthesis via de novo pathway; UMP from orotate: step 2/2. Its function is as follows. Catalyzes the decarboxylation of orotidine 5'-monophosphate (OMP) to uridine 5'-monophosphate (UMP). In Shigella flexneri serotype 5b (strain 8401), this protein is Orotidine 5'-phosphate decarboxylase.